The sequence spans 582 residues: tRNA(Ile)-lysidine synthase (582 aa).

An ATP-binding site is contributed by 46–51 (SGGADS). In terms of domain architecture, CMP/dCMP-type deaminase spans 402–525 (DPLHAAMGEA…DLLADHWGWR (124 aa)). The disordered stretch occupies residues 548–582 (VRRRSADTPQTPNAETPAPRSSRSTSASGKPTMLE). Low complexity predominate over residues 563 to 575 (TPAPRSSRSTSAS).

It belongs to the tRNA(Ile)-lysidine synthase family.

The protein localises to the cytoplasm. It carries out the reaction cytidine(34) in tRNA(Ile2) + L-lysine + ATP = lysidine(34) in tRNA(Ile2) + AMP + diphosphate + H(+). In terms of biological role, ligates lysine onto the cytidine present at position 34 of the AUA codon-specific tRNA(Ile) that contains the anticodon CAU, in an ATP-dependent manner. Cytidine is converted to lysidine, thus changing the amino acid specificity of the tRNA from methionine to isoleucine. This Deinococcus radiodurans (strain ATCC 13939 / DSM 20539 / JCM 16871 / CCUG 27074 / LMG 4051 / NBRC 15346 / NCIMB 9279 / VKM B-1422 / R1) protein is tRNA(Ile)-lysidine synthase.